The primary structure comprises 100 residues: Urease subunit gamma (100 aa).

The protein belongs to the urease gamma subunit family. In terms of assembly, heterotrimer of UreA (gamma), UreB (beta) and UreC (alpha) subunits. Three heterotrimers associate to form the active enzyme.

Its subcellular location is the cytoplasm. It carries out the reaction urea + 2 H2O + H(+) = hydrogencarbonate + 2 NH4(+). It functions in the pathway nitrogen metabolism; urea degradation; CO(2) and NH(3) from urea (urease route): step 1/1. This Halalkalibacterium halodurans (strain ATCC BAA-125 / DSM 18197 / FERM 7344 / JCM 9153 / C-125) (Bacillus halodurans) protein is Urease subunit gamma.